The primary structure comprises 160 residues: Endoribonuclease YbeY (160 aa).

The Zn(2+) site is built by H112, H116, and H122. Residues E141–K160 are disordered.

The protein belongs to the endoribonuclease YbeY family. Requires Zn(2+) as cofactor.

It localises to the cytoplasm. In terms of biological role, single strand-specific metallo-endoribonuclease involved in late-stage 70S ribosome quality control and in maturation of the 3' terminus of the 16S rRNA. The chain is Endoribonuclease YbeY from Pseudomonas paraeruginosa (strain DSM 24068 / PA7) (Pseudomonas aeruginosa (strain PA7)).